Here is a 732-residue protein sequence, read N- to C-terminus: E3 ubiquitin-protein ligase DCST1 (732 aa).

Residues 1–46 (MAFLSSTLHSLGIFEKISRIKEVLKNRLLDLTKRRDQAREQQRKRP) lie on the Cytoplasmic side of the membrane. A helical transmembrane segment spans residues 47 to 67 (HTIIQGLLLWSLPVSWIRFLW). The Extracellular segment spans residues 68 to 76 (RQPGEFPVT). Residues 77–97 (AFLLGAGTGGLLAIGLFQLLV) traverse the membrane as a helical segment. Over 98–107 (NPMNIYEEQK) the chain is Cytoplasmic. Residues 108-128 (VVALYCLASLGAIGWGTSPHI) traverse the membrane as a helical segment. At 129–394 (RCASLLLVPK…VRDYVRQQET (266 aa)) the chain is on the extracellular side. Asn-184, Asn-217, Asn-346, and Asn-374 each carry an N-linked (GlcNAc...) asparagine glycan. Residues 395–415 (YLQWAMGLLHVLLSCTFLLVF) form a helical membrane-spanning segment. Residues 416-489 (HSAFSYMDHY…RYVIRELLET (74 aa)) are Cytoplasmic-facing. A helical membrane pass occupies residues 490 to 510 (LPIVLLLLVLCAIDWALYSVF). Residues 511 to 576 (DTIRQHSFVQ…PQPISLNARD (66 aa)) lie on the Extracellular side of the membrane. A glycan (N-linked (GlcNAc...) asparagine) is linked at Asn-551. Residues 577–597 (YFKASLPTLLLVCLCLAQAFG) form a helical membrane-spanning segment. Residues 598-732 (YRLRRVIAAF…DSNDDAVYGD (135 aa)) lie on the Cytoplasmic side of the membrane. Residues 672–711 (CVVCQAMETPDSYVCPTPDCKALYCRSCWDDMQRLCPVCT) form an RING-type; degenerate zinc finger.

As to quaternary structure, interacts with STAT2; the interaction results in STAT2 'Lys-48'-linked ubiquitination leading to its proteasomal degradation. Interacts with DCST2. In terms of tissue distribution, expressed in testis.

The protein localises to the cell membrane. Its subcellular location is the cytoplasmic vesicle. It is found in the secretory vesicle. It localises to the acrosome membrane. It carries out the reaction S-ubiquitinyl-[E2 ubiquitin-conjugating enzyme]-L-cysteine + [acceptor protein]-L-lysine = [E2 ubiquitin-conjugating enzyme]-L-cysteine + N(6)-ubiquitinyl-[acceptor protein]-L-lysine.. It participates in protein modification; protein ubiquitination. In terms of biological role, E3 ubiquitin-protein ligase which mediates 'Lys-48'-linked ubiquitination of STAT2 and induces its proteasomal degradation thereby negatively regulating type-I-interferon signaling. Essential sperm cell-surface protein required for sperm-egg fusion and fertilization. The polypeptide is E3 ubiquitin-protein ligase DCST1 (Dcst1) (Mus musculus (Mouse)).